The sequence spans 189 residues: MNLSATLVLAFAMSMDAFAASIGKGASLHKPRFREAIRTGLIFGVIEAITPLIGWCIGLFASQYILEWDHWIAFSLLFILGCRMIFEGAKQQVEETEKMRSHSFWVLVMTAIATSLDAMAIGVGLAFLQVNIVHTAMAIGLATMIMATLGMLIGRYIGPLLGKRAEIIGGIVLIGIGFNILYEHIYRLA.

Transmembrane regions (helical) follow at residues 3–23 (LSAT…ASIG), 41–61 (LIFG…GLFA), 65–85 (ILEW…CRMI), 104–124 (FWVL…IGVG), 132–152 (IVHT…LGML), and 165–185 (AEII…YEHI).

The protein belongs to the MntP (TC 9.B.29) family.

The protein localises to the cell inner membrane. Functionally, probably functions as a manganese efflux pump. This is Putative manganese efflux pump MntP from Yersinia enterocolitica serotype O:8 / biotype 1B (strain NCTC 13174 / 8081).